Here is a 223-residue protein sequence, read N- to C-terminus: Ribonuclease 3 (223 aa).

One can recognise an RNase III domain in the interval 3–125; the sequence is LERLQKKLGY…IIAAVYLDAG (123 aa). Glutamate 38 is a binding site for Mg(2+). Residue aspartate 42 is part of the active site. 2 residues coordinate Mg(2+): aspartate 111 and glutamate 114. Glutamate 114 is a catalytic residue. One can recognise a DRBM domain in the interval 152–222; it reads DPKTRLQEYL…ALQVIKVLGI (71 aa).

Belongs to the ribonuclease III family. In terms of assembly, homodimer. Mg(2+) serves as cofactor.

It localises to the cytoplasm. It carries out the reaction Endonucleolytic cleavage to 5'-phosphomonoester.. Its function is as follows. Digests double-stranded RNA. Involved in the processing of primary rRNA transcript to yield the immediate precursors to the large and small rRNAs (23S and 16S). Processes some mRNAs, and tRNAs when they are encoded in the rRNA operon. Processes pre-crRNA and tracrRNA of type II CRISPR loci if present in the organism. In Glaesserella parasuis serovar 5 (strain SH0165) (Haemophilus parasuis), this protein is Ribonuclease 3.